A 404-amino-acid polypeptide reads, in one-letter code: Argininosuccinate synthase (404 aa).

ATP is bound by residues 12-20 and Ala-40; that span reads AYSGGLDTS. Residues Tyr-92 and Ser-97 each contribute to the L-citrulline site. Gly-122 provides a ligand contact to ATP. Residues Thr-124, Asn-128, and Asp-129 each coordinate L-aspartate. Asn-128 lines the L-citrulline pocket. Positions 132, 181, 190, 266, and 278 each coordinate L-citrulline.

The protein belongs to the argininosuccinate synthase family. Type 1 subfamily. In terms of assembly, homotetramer.

The protein localises to the cytoplasm. The catalysed reaction is L-citrulline + L-aspartate + ATP = 2-(N(omega)-L-arginino)succinate + AMP + diphosphate + H(+). It participates in amino-acid biosynthesis; L-arginine biosynthesis; L-arginine from L-ornithine and carbamoyl phosphate: step 2/3. The polypeptide is Argininosuccinate synthase (Photorhabdus laumondii subsp. laumondii (strain DSM 15139 / CIP 105565 / TT01) (Photorhabdus luminescens subsp. laumondii)).